The primary structure comprises 261 residues: Chitinase 8 (261 aa).

The signal sequence occupies residues 1–29 (MTTTTTRFVQLAACAAASLLAVAASGAAA). Disulfide bonds link C53–C115 and C221–C253. The Proton donor role is filled by E98.

It belongs to the glycosyl hydrolase 19 family. Chitinase class II subfamily. As to expression, expressed in roots, leaves, sheaths and meristems.

The enzyme catalyses Random endo-hydrolysis of N-acetyl-beta-D-glucosaminide (1-&gt;4)-beta-linkages in chitin and chitodextrins.. This chain is Chitinase 8 (Cht8), found in Oryza sativa subsp. japonica (Rice).